The primary structure comprises 3753 residues: Intermembrane lipid transfer protein VPS13C (3753 aa).

Residues 3 to 116 (LESVVADLLN…LQDVKQKELS (114 aa)) form the Chorein N-terminal domain. A Phosphoserine modification is found at serine 132. The span at 150–164 (GRKRKKHKKHFKKPF) shows a compositional bias: basic residues. The disordered stretch occupies residues 150–176 (GRKRKKHKKHFKKPFKGLDRSKDKPKE). Residues 165 to 176 (KGLDRSKDKPKE) are compositionally biased toward basic and acidic residues. A Phosphothreonine modification is found at threonine 614. Phosphoserine is present on serine 619. Threonine 624 carries the post-translational modification Phosphothreonine. Phosphoserine occurs at positions 737, 842, 872, and 874. An FFAT motif is present at residues 877–883 (EYFDAED). Residues serine 1979 and serine 2473 each carry the phosphoserine modification. The segment at 2415–3309 (DYSLKDRAPF…IQQDIDALNA (895 aa)) is required for late endosome/lysosome localization. The 251-residue stretch at 2766–3016 (LSVFSPYWLI…RLFAWADPTG (251 aa)) folds into the SHR-BD domain. A required for lipid droplet localization region spans residues 3310–3753 (ELMETSMTDM…VRLLRPQLPS (444 aa)). 2 positions are modified to omega-N-methylarginine: arginine 3519 and arginine 3526. The residue at position 3538 (lysine 3538) is an N6-acetyllysine. Phosphoserine is present on serine 3641.

It belongs to the VPS13 family. Widely expressed.

The protein localises to the mitochondrion outer membrane. It localises to the lipid droplet. Its subcellular location is the endoplasmic reticulum membrane. The protein resides in the lysosome membrane. It is found in the late endosome membrane. In terms of biological role, mediates the transfer of lipids between membranes at organelle contact sites. Necessary for proper mitochondrial function and maintenance of mitochondrial transmembrane potential. Involved in the regulation of PINK1/PRKN-mediated mitophagy in response to mitochondrial depolarization. The protein is Intermembrane lipid transfer protein VPS13C of Homo sapiens (Human).